A 343-amino-acid polypeptide reads, in one-letter code: L-threonine 3-dehydrogenase (343 aa).

Zn(2+) is bound at residue Cys-38. Active-site charge relay system residues include Thr-40 and His-43. His-63, Glu-64, Cys-93, Cys-96, Cys-99, and Cys-107 together coordinate Zn(2+). Residues Ile-175, Asp-195, Arg-200, 262 to 264, and 286 to 287 contribute to the NAD(+) site; these read LGL and IY.

It belongs to the zinc-containing alcohol dehydrogenase family. Homotetramer. The cofactor is Zn(2+).

It is found in the cytoplasm. The enzyme catalyses L-threonine + NAD(+) = (2S)-2-amino-3-oxobutanoate + NADH + H(+). The protein operates within amino-acid degradation; L-threonine degradation via oxydo-reductase pathway; glycine from L-threonine: step 1/2. Functionally, catalyzes the NAD(+)-dependent oxidation of L-threonine to 2-amino-3-ketobutyrate. The sequence is that of L-threonine 3-dehydrogenase from Saccharopolyspora erythraea (strain ATCC 11635 / DSM 40517 / JCM 4748 / NBRC 13426 / NCIMB 8594 / NRRL 2338).